The primary structure comprises 750 residues: Photosystem I P700 chlorophyll a apoprotein A1 (750 aa).

8 helical membrane-spanning segments follow: residues 70–93 (VFSA…FHGA), 156–179 (LYTT…FHYH), 195–219 (LNHH…HVSL), 291–309 (TAHH…GHMY), 346–369 (WHAQ…HHMY), 385–411 (LSLF…IFMV), 433–455 (AIIS…LYIH), and 531–549 (FLVH…LILL). Residues C573 and C582 each contribute to the [4Fe-4S] cluster site. 2 consecutive transmembrane segments (helical) span residues 589–610 (HVFL…HFSW) and 664–686 (LSAY…MFLF). A chlorophyll a'-binding site is contributed by H675. The chlorophyll a site is built by M683 and Y691. W692 contacts phylloquinone. A helical transmembrane segment spans residues 724–744 (AVGVAHYLLGGIATTWAFFLA).

Belongs to the PsaA/PsaB family. As to quaternary structure, the PsaA/B heterodimer binds the P700 chlorophyll special pair and subsequent electron acceptors. PSI consists of a core antenna complex that captures photons, and an electron transfer chain that converts photonic excitation into a charge separation. The eukaryotic PSI reaction center is composed of at least 11 subunits. It depends on P700 is a chlorophyll a/chlorophyll a' dimer, A0 is one or more chlorophyll a, A1 is one or both phylloquinones and FX is a shared 4Fe-4S iron-sulfur center. as a cofactor.

Its subcellular location is the plastid. It is found in the chloroplast thylakoid membrane. The enzyme catalyses reduced [plastocyanin] + hnu + oxidized [2Fe-2S]-[ferredoxin] = oxidized [plastocyanin] + reduced [2Fe-2S]-[ferredoxin]. Its function is as follows. PsaA and PsaB bind P700, the primary electron donor of photosystem I (PSI), as well as the electron acceptors A0, A1 and FX. PSI is a plastocyanin-ferredoxin oxidoreductase, converting photonic excitation into a charge separation, which transfers an electron from the donor P700 chlorophyll pair to the spectroscopically characterized acceptors A0, A1, FX, FA and FB in turn. Oxidized P700 is reduced on the lumenal side of the thylakoid membrane by plastocyanin. This is Photosystem I P700 chlorophyll a apoprotein A1 from Physcomitrium patens (Spreading-leaved earth moss).